Reading from the N-terminus, the 142-residue chain is Small heat shock protein IbpB (142 aa).

The sHSP domain maps to 26 to 137; that stretch reads TAEHQAFPPY…APQRIAISDR (112 aa).

It belongs to the small heat shock protein (HSP20) family. As to quaternary structure, homodimer. Forms homomultimers of about 100-150 subunits at optimal growth temperatures. Conformation changes to oligomers at high temperatures or high ionic concentrations. The decrease in size of the multimers is accompanied by an increase in chaperone activity.

It is found in the cytoplasm. In terms of biological role, associates with aggregated proteins, together with IbpA, to stabilize and protect them from irreversible denaturation and extensive proteolysis during heat shock and oxidative stress. Aggregated proteins bound to the IbpAB complex are more efficiently refolded and reactivated by the ATP-dependent chaperone systems ClpB and DnaK/DnaJ/GrpE. Its activity is ATP-independent. The protein is Small heat shock protein IbpB of Enterobacter sp. (strain 638).